A 1159-amino-acid chain; its full sequence is DNA-directed RNA polymerase subunit beta (1159 aa).

It belongs to the RNA polymerase beta chain family. As to quaternary structure, the RNAP catalytic core consists of 2 alpha, 1 beta, 1 beta' and 1 omega subunit. When a sigma factor is associated with the core the holoenzyme is formed, which can initiate transcription.

The enzyme catalyses RNA(n) + a ribonucleoside 5'-triphosphate = RNA(n+1) + diphosphate. In terms of biological role, DNA-dependent RNA polymerase catalyzes the transcription of DNA into RNA using the four ribonucleoside triphosphates as substrates. The protein is DNA-directed RNA polymerase subunit beta of Deinococcus radiodurans (strain ATCC 13939 / DSM 20539 / JCM 16871 / CCUG 27074 / LMG 4051 / NBRC 15346 / NCIMB 9279 / VKM B-1422 / R1).